The chain runs to 82 residues: Cytochrome b-c1 complex subunit 8 (82 aa).

Topologically, residues 1-39 (MGREFGNLTRIRHVISYSLSPFEQRAFPHYFSKGIPNVL) are mitochondrial matrix. A Phosphoserine modification is found at Ser-16. N6-acetyllysine; alternate is present on Lys-33. N6-succinyllysine; alternate is present on Lys-33. Residues 40-68 (RRTRERILRVAPPFVLFYLIYTWGNQEFA) form a helical membrane-spanning segment. Residues 69–82 (QSKRKNPAKYENDK) lie on the Mitochondrial intermembrane side of the membrane.

This sequence belongs to the UQCRQ/QCR8 family. In terms of assembly, component of the ubiquinol-cytochrome c oxidoreductase (cytochrome b-c1 complex, complex III, CIII), a multisubunit enzyme composed of 11 subunits. The complex is composed of 3 respiratory subunits cytochrome b, cytochrome c1 and Rieske protein UQCRFS1, 2 core protein subunits UQCRC1/QCR1 and UQCRC2/QCR2, and 6 low-molecular weight protein subunits UQCRH/QCR6, UQCRB/QCR7, UQCRQ/QCR8, UQCR10/QCR9, UQCR11/QCR10 and subunit 9, the cleavage product of Rieske protein UQCRFS1. The complex exists as an obligatory dimer and forms supercomplexes (SCs) in the inner mitochondrial membrane with NADH-ubiquinone oxidoreductase (complex I, CI) and cytochrome c oxidase (complex IV, CIV), resulting in different assemblies (supercomplex SCI(1)III(2)IV(1) and megacomplex MCI(2)III(2)IV(2)). Interacts with UQCC6.

The protein localises to the mitochondrion inner membrane. Component of the ubiquinol-cytochrome c oxidoreductase, a multisubunit transmembrane complex that is part of the mitochondrial electron transport chain which drives oxidative phosphorylation. The respiratory chain contains 3 multisubunit complexes succinate dehydrogenase (complex II, CII), ubiquinol-cytochrome c oxidoreductase (cytochrome b-c1 complex, complex III, CIII) and cytochrome c oxidase (complex IV, CIV), that cooperate to transfer electrons derived from NADH and succinate to molecular oxygen, creating an electrochemical gradient over the inner membrane that drives transmembrane transport and the ATP synthase. The cytochrome b-c1 complex catalyzes electron transfer from ubiquinol to cytochrome c, linking this redox reaction to translocation of protons across the mitochondrial inner membrane, with protons being carried across the membrane as hydrogens on the quinol. In the process called Q cycle, 2 protons are consumed from the matrix, 4 protons are released into the intermembrane space and 2 electrons are passed to cytochrome c. In Rattus norvegicus (Rat), this protein is Cytochrome b-c1 complex subunit 8 (Uqcrq).